A 247-amino-acid polypeptide reads, in one-letter code: MINNYIDITIRLLENILDNEADYVKEAGAKVAESIENDGVIHLFGCGHSHILTEEVFYRAGGLAAIHPILHEPLMLHEGAAASSVLERKNDYAKTFMAEEDIRSGDVMIVLSTSGRNPVPIDVAEIAREKGAFVIVITSLQYSASQKSRHTSGKRLSDTGDIVIDNGAVKGDAVLKSANFDIAFAPTSTVTGAVILQSIFAEAIEKMVNDNFTPPVFISGNVENADEHNQALVDKYNERIPLLGMNL.

In terms of domain architecture, SIS spans 31 to 214 (VAESIENDGV…EKMVNDNFTP (184 aa)).

It belongs to the UPF0309 family.

The sequence is that of UPF0309 protein lin2794 from Listeria innocua serovar 6a (strain ATCC BAA-680 / CLIP 11262).